A 351-amino-acid polypeptide reads, in one-letter code: MLKNDLFLRALKRQPCSRTPIWVMRQAGRYLPEYRAIREKTDFLTLCKTPELAMEVTIQPVELMGVDAAIIFSDILVVNEAMGMDVEIIETKGIKLTPPIRSQADINRLIIPEVQDKLGYVLDAIRLTKKVLDNRVPLIGFSGAAWTLFTYAVEGGGSKNYAFAKKMMYREPKMAHMLLSKISAVISEYVCAQVEAGADAIQIFDSWASALSEDDYREFALPYIKENVQAVKAKYPDVPVIVFSKDCNTILSEIADTGCDAVGLGWGIDIKKARTILGDRVCLQGNMDPTVLYGTPEKIKAEAAKVLRQFGQHTAQSGHVFNLGHGILPDVDPANLKLLVEFVKEESAKYH.

Substrate-binding positions include 25–29, aspartate 74, tyrosine 151, serine 206, and histidine 325; that span reads RQAGR.

Belongs to the uroporphyrinogen decarboxylase family. In terms of assembly, homodimer.

Its subcellular location is the cytoplasm. The catalysed reaction is uroporphyrinogen III + 4 H(+) = coproporphyrinogen III + 4 CO2. It participates in porphyrin-containing compound metabolism; protoporphyrin-IX biosynthesis; coproporphyrinogen-III from 5-aminolevulinate: step 4/4. Catalyzes the decarboxylation of four acetate groups of uroporphyrinogen-III to yield coproporphyrinogen-III. This Chlorobium luteolum (strain DSM 273 / BCRC 81028 / 2530) (Pelodictyon luteolum) protein is Uroporphyrinogen decarboxylase.